Here is a 569-residue protein sequence, read N- to C-terminus: ATP-dependent RNA helicase dhh1 (569 aa).

The span at 1-16 (MSDQLADQLKATSLSS) shows a compositional bias: polar residues. Residues 1-39 (MSDQLADQLKATSLSSGPEDWKKGLNLPARDTRQQTEDV) form a disordered region. The Q motif signature appears at 45–73 (LDWEDFIHDRDLLMGIFEAGFEKPSPIQE). The region spanning 76–246 (IPVALTGRDI…DKNMTSPYEI (171 aa)) is the Helicase ATP-binding domain. 89-96 (AKNGTGKT) is an ATP binding site. A DEAD box motif is present at residues 194–197 (DEAD). The Helicase C-terminal domain maps to 256–416 (GITQYYAFVE…PIPQTIDKSL (161 aa)). The segment at 436 to 569 (AQQPQQQLQQ…GQPQGPLSAQ (134 aa)) is disordered. The span at 437–482 (QQPQQQLQQSQRPQQSQQQQHFSTQTQPSNQLPPQQGNQQLGFNPQ) shows a compositional bias: low complexity. Positions 495-520 (GDWQGQNGRQNGTGASNNQPRPTNYQ) are enriched in polar residues. The span at 529–542 (SRGGRGRGFQGQGG) shows a compositional bias: gly residues. Over residues 543 to 569 (RQNQNYGGQRGPRTQGQGQPQGPLSAQ) the composition is skewed to low complexity.

Belongs to the DEAD box helicase family. DDX6/DHH1 subfamily.

It is found in the cytoplasm. Its subcellular location is the P-body. It catalyses the reaction ATP + H2O = ADP + phosphate + H(+). ATP-dependent RNA helicase involved in mRNA turnover, and more specifically in mRNA decapping. Is involved in G1/S DNA-damage checkpoint recovery, probably through the regulation of the translational status of a subset of mRNAs. May also have a role in translation and mRNA nuclear export. This Neurospora crassa (strain ATCC 24698 / 74-OR23-1A / CBS 708.71 / DSM 1257 / FGSC 987) protein is ATP-dependent RNA helicase dhh1 (drh-10).